The primary structure comprises 422 residues: Enolase (422 aa).

Gln162 serves as a coordination point for (2R)-2-phosphoglycerate. Glu204 acts as the Proton donor in catalysis. Mg(2+) contacts are provided by Asp241, Glu284, and Asp311. Lys336, Arg365, Ser366, and Lys387 together coordinate (2R)-2-phosphoglycerate. The active-site Proton acceptor is the Lys336.

The protein belongs to the enolase family. It depends on Mg(2+) as a cofactor.

It localises to the cytoplasm. Its subcellular location is the secreted. It is found in the cell surface. It carries out the reaction (2R)-2-phosphoglycerate = phosphoenolpyruvate + H2O. Its pathway is carbohydrate degradation; glycolysis; pyruvate from D-glyceraldehyde 3-phosphate: step 4/5. Catalyzes the reversible conversion of 2-phosphoglycerate (2-PG) into phosphoenolpyruvate (PEP). It is essential for the degradation of carbohydrates via glycolysis. This Thermus thermophilus (strain ATCC 27634 / DSM 579 / HB8) protein is Enolase.